The following is a 334-amino-acid chain: Galactosylgalactosylxylosylprotein 3-beta-glucuronosyltransferase 1 (334 aa).

Residues 1–6 (MPKRRD) are Cytoplasmic-facing. The tract at residues 3–5 (KRR) is essential for transport from endoplasmic reticulum to Golgi apparatus and interaction with SAR1A. The helical; Signal-anchor for type II membrane protein transmembrane segment at 7–27 (ILAIVLIVLPWTLLITVWHQS) threads the bilayer. Residues 28 to 334 (TLAPLLAVHK…KGFTDPSVEI (307 aa)) are Lumenal-facing. Residues 37–56 (KDEGSDPRRETPPGADPREY) form a disordered region. 91–93 (PTY) contacts UDP-alpha-D-glucuronate. Threonine 103 and threonine 108 each carry phosphothreonine. Position 122 (aspartate 122) interacts with UDP-alpha-D-glucuronate. Asparagine 140 carries an N-linked (GlcNAc...) asparagine glycan. 2 residues coordinate UDP-alpha-D-glucuronate: arginine 165 and arginine 170. Asparagine 184 is a glycosylation site (N-linked (GlcNAc...) asparagine). Position 195–197 (195–197 (DDD)) interacts with UDP-alpha-D-glucuronate. Aspartate 197 contacts Mn(2+). The segment at 245–254 (FDPHRPFAID) is interaction with galactose moiety of substrate glycoprotein. Glutamate 284 functions as the Proton donor/acceptor in the catalytic mechanism. N-linked (GlcNAc...) asparagine glycosylation occurs at asparagine 303. 311-313 (HTR) provides a ligand contact to UDP-alpha-D-glucuronate.

This sequence belongs to the glycosyltransferase 43 family. As to quaternary structure, homodimer. Interacts with SAR1A. Mn(2+) serves as cofactor. Post-translationally, the soluble form derives from the membrane form by proteolytic processing. Mainly expressed in the brain.

It is found in the golgi apparatus membrane. Its subcellular location is the secreted. The protein localises to the endoplasmic reticulum membrane. The catalysed reaction is 3-O-(beta-D-galactosyl-(1-&gt;3)-beta-D-galactosyl-(1-&gt;4)-beta-D-xylosyl)-L-seryl-[protein] + UDP-alpha-D-glucuronate = 3-O-(beta-D-GlcA-(1-&gt;3)-beta-D-Gal-(1-&gt;3)-beta-D-Gal-(1-&gt;4)-beta-D-Xyl)-L-seryl-[protein] + UDP + H(+). The protein operates within protein modification; protein glycosylation. Functionally, involved in the biosynthesis of L2/HNK-1 carbohydrate epitope on glycoproteins. Can also play a role in glycosaminoglycan biosynthesis. Substrates include asialo-orosomucoid (ASOR), asialo-fetuin, and asialo-neural cell adhesion molecule. Requires sphingomyelin for activity: stearoyl-sphingomyelin was the most effective, followed by palmitoyl-sphingomyelin and lignoceroyl-sphingomyelin. Activity was demonstrated only for sphingomyelin with a saturated fatty acid and not for that with an unsaturated fatty acid, regardless of the length of the acyl group. The chain is Galactosylgalactosylxylosylprotein 3-beta-glucuronosyltransferase 1 from Homo sapiens (Human).